A 465-amino-acid chain; its full sequence is Exoenzymes regulatory protein AepA (465 aa).

Positions 1-21 (MKFNVKMLSVTLGLFTSHAFA) are cleaved as a signal peptide.

This sequence belongs to the metallo-dependent hydrolases superfamily.

In terms of biological role, involved in the control of extracellular enzymes production. Stimulates PEL, PEH, CEL, and PRT production. This chain is Exoenzymes regulatory protein AepA (aepA), found in Pectobacterium carotovorum subsp. carotovorum (Erwinia carotovora subsp. carotovora).